The following is a 205-amino-acid chain: MFITFEGIDGSGKTIQSELLANYFKQIHGENNMVLTREPGGTDFAEKVRGILLKDSIDPVSELLLLISMRYEHVKKVILPALKKGKIVICDRFIDSTIAYQGYGLGVDLELIRDLHKLVKIKYPDTTFILDIDVQIGLSRAMDKNKYEEMNISFYNKVRKGFQEIAINEPDRCSIITEIEAKDNNQVHVEIVNKVTATKPVLLRK.

7–14 (GIDGSGKT) is a binding site for ATP.

This sequence belongs to the thymidylate kinase family.

It catalyses the reaction dTMP + ATP = dTDP + ADP. Functionally, phosphorylation of dTMP to form dTDP in both de novo and salvage pathways of dTTP synthesis. The chain is Thymidylate kinase from Wolbachia sp. subsp. Brugia malayi (strain TRS).